Reading from the N-terminus, the 1072-residue chain is Carbamoyl phosphate synthase large chain (1072 aa).

A carboxyphosphate synthetic domain region spans residues 1–401 (MPKRLDINTI…SLLKAVRSLE (401 aa)). ATP-binding residues include arginine 129, arginine 169, glycine 175, glycine 176, lysine 208, isoleucine 210, glutamate 215, glycine 241, valine 242, histidine 243, glutamine 284, and glutamate 298. The ATP-grasp 1 domain maps to 133-327 (RTLMQDLNEP…IAKLAAKIAV (195 aa)). Residues glutamine 284, glutamate 298, and asparagine 300 each contribute to the Mg(2+) site. Mn(2+) contacts are provided by glutamine 284, glutamate 298, and asparagine 300. The segment at 402 to 546 (LGIYHLELDH…YSTYADENES (145 aa)) is oligomerization domain. The segment at 547–929 (IVTDRKSVVV…ALYKGLVASG (383 aa)) is carbamoyl phosphate synthetic domain. Residues 671–861 (EAALTKLGIP…MANVATKVIL (191 aa)) enclose the ATP-grasp 2 domain. 9 residues coordinate ATP: arginine 707, arginine 746, glutamate 752, glycine 777, valine 778, histidine 779, serine 780, glutamine 820, and glutamate 832. Mg(2+) contacts are provided by glutamine 820, glutamate 832, and asparagine 834. The Mn(2+) site is built by glutamine 820, glutamate 832, and asparagine 834. In terms of domain architecture, MGS-like spans 930 to 1072 (INIPTHGSVI…QTKRHEVVHA (143 aa)). The segment at 930 to 1072 (INIPTHGSVI…QTKRHEVVHA (143 aa)) is allosteric domain.

Belongs to the CarB family. In terms of assembly, composed of two chains; the small (or glutamine) chain promotes the hydrolysis of glutamine to ammonia, which is used by the large (or ammonia) chain to synthesize carbamoyl phosphate. Tetramer of heterodimers (alpha,beta)4. It depends on Mg(2+) as a cofactor. Mn(2+) is required as a cofactor.

It carries out the reaction hydrogencarbonate + L-glutamine + 2 ATP + H2O = carbamoyl phosphate + L-glutamate + 2 ADP + phosphate + 2 H(+). The catalysed reaction is hydrogencarbonate + NH4(+) + 2 ATP = carbamoyl phosphate + 2 ADP + phosphate + 2 H(+). It participates in amino-acid biosynthesis; L-arginine biosynthesis; carbamoyl phosphate from bicarbonate: step 1/1. Its pathway is pyrimidine metabolism; UMP biosynthesis via de novo pathway; (S)-dihydroorotate from bicarbonate: step 1/3. Functionally, large subunit of the glutamine-dependent carbamoyl phosphate synthetase (CPSase). CPSase catalyzes the formation of carbamoyl phosphate from the ammonia moiety of glutamine, carbonate, and phosphate donated by ATP, constituting the first step of 2 biosynthetic pathways, one leading to arginine and/or urea and the other to pyrimidine nucleotides. The large subunit (synthetase) binds the substrates ammonia (free or transferred from glutamine from the small subunit), hydrogencarbonate and ATP and carries out an ATP-coupled ligase reaction, activating hydrogencarbonate by forming carboxy phosphate which reacts with ammonia to form carbamoyl phosphate. The polypeptide is Carbamoyl phosphate synthase large chain (Bacillus cereus (strain AH187)).